The sequence spans 444 residues: Trigger factor (444 aa).

A PPIase FKBP-type domain is found at 163 to 248; it reads GDIAVIDSPV…VKELRKNVPA (86 aa).

The protein belongs to the FKBP-type PPIase family. Tig subfamily.

It is found in the cytoplasm. It carries out the reaction [protein]-peptidylproline (omega=180) = [protein]-peptidylproline (omega=0). In terms of biological role, involved in protein export. Acts as a chaperone by maintaining the newly synthesized protein in an open conformation. Functions as a peptidyl-prolyl cis-trans isomerase. In Azospirillum brasilense, this protein is Trigger factor (tig).